Consider the following 396-residue polypeptide: Digeranylgeranylglycerophospholipid reductase 2 (396 aa).

The FAD site is built by Ala-13, Glu-32, Cys-43, Ala-44, Gly-46, Arg-92, Ala-116, Asp-278, Gly-290, and Leu-291.

It belongs to the geranylgeranyl reductase family. DGGGPL reductase subfamily. It depends on FAD as a cofactor.

The enzyme catalyses a 2,3-bis-O-phytanyl-sn-glycerol 1-phospholipid + 8 A = a 2,3-bis-O-(geranylgeranyl)-sn-glycerol 1-phospholipid + 8 AH2. The catalysed reaction is 2,3-bis-O-(phytanyl)-sn-glycerol 1-phosphate + 8 A = 2,3-bis-O-(geranylgeranyl)-sn-glycerol 1-phosphate + 8 AH2. It catalyses the reaction CDP-2,3-bis-O-(geranylgeranyl)-sn-glycerol + 8 AH2 = CDP-2,3-bis-O-(phytanyl)-sn-glycerol + 8 A. It carries out the reaction archaetidylserine + 8 AH2 = 2,3-bis-O-phytanyl-sn-glycero-3-phospho-L-serine + 8 A. The protein operates within membrane lipid metabolism; glycerophospholipid metabolism. Functionally, is involved in the reduction of 2,3-digeranylgeranylglycerophospholipids (unsaturated archaeols) into 2,3-diphytanylglycerophospholipids (saturated archaeols) in the biosynthesis of archaeal membrane lipids. Catalyzes the formation of archaetidic acid (2,3-di-O-phytanyl-sn-glyceryl phosphate) from 2,3-di-O-geranylgeranylglyceryl phosphate (DGGGP) via the hydrogenation of each double bond of the isoprenoid chains. Is also probably able to reduce double bonds of geranyl groups in CDP-2,3-bis-O-(geranylgeranyl)-sn-glycerol and archaetidylserine, thus acting at various stages in the biosynthesis of archaeal membrane lipids. The protein is Digeranylgeranylglycerophospholipid reductase 2 of Methanopyrus kandleri (strain AV19 / DSM 6324 / JCM 9639 / NBRC 100938).